The chain runs to 327 residues: Probable cell division protein WhiA (327 aa).

Positions 275 to 308 (SLEELGRLADPQMTKDAVAGRIRRLLTTADKRAR) form a DNA-binding region, H-T-H motif.

This sequence belongs to the WhiA family.

Its function is as follows. Involved in cell division and chromosome segregation. The polypeptide is Probable cell division protein WhiA (Corynebacterium efficiens (strain DSM 44549 / YS-314 / AJ 12310 / JCM 11189 / NBRC 100395)).